A 69-amino-acid chain; its full sequence is Magnetosome protein MamI (69 aa).

The Cytoplasmic segment spans residues Met-1–Pro-2. The helical transmembrane segment at Ser-3 to Trp-23 threads the bilayer. Topologically, residues Ser-24–Gly-31 are lumenal. The chain crosses the membrane as a helical span at residues Ala-32–Val-52. At Arg-53–Gly-69 the chain is on the cytoplasmic side.

The protein belongs to the magnetosome MamI protein family.

The protein localises to the magnetosome membrane. Its function is as follows. May be involved in an early stage of magnetosome nucleation. Not essential for formation of magnetosome membrane vesicles, it is probably functionally redundant with other proteins. May bind magnetite. One of 7 genes (mamLQBIEMO) able to induce magnetosome membrane biogenesis; coexpression of mamLQRBIEMO in a deletion of the 17 gene mamAB operon restores magnetosome vesicle formation but not magnetite biosynthesis. This chain is Magnetosome protein MamI, found in Magnetospirillum gryphiswaldense (strain DSM 6361 / JCM 21280 / NBRC 15271 / MSR-1).